We begin with the raw amino-acid sequence, 483 residues long: NADH-quinone oxidoreductase subunit N (483 aa).

The next 14 membrane-spanning stretches (helical) occupy residues 8–28 (INLA…GLLL), 45–65 (IAAG…GATQ), 78–98 (FAAF…VVSW), 106–126 (LGNG…MFMI), 131–151 (FLVL…LAAY), 166–186 (FVLG…IYGV), 206–226 (MLGI…KIAA), 241–261 (PTSV…AALF), 275–295 (WGPI…LAGL), 303–323 (LLAY…AVGN), 330–350 (VLVY…LILV), 373–393 (LALL…LAGF), 399–419 (IFMA…VLFS), and 452–472 (AIVG…GSLM).

It belongs to the complex I subunit 2 family. NDH-1 is composed of 14 different subunits. Subunits NuoA, H, J, K, L, M, N constitute the membrane sector of the complex.

Its subcellular location is the cell inner membrane. It catalyses the reaction a quinone + NADH + 5 H(+)(in) = a quinol + NAD(+) + 4 H(+)(out). In terms of biological role, NDH-1 shuttles electrons from NADH, via FMN and iron-sulfur (Fe-S) centers, to quinones in the respiratory chain. The immediate electron acceptor for the enzyme in this species is believed to be ubiquinone. Couples the redox reaction to proton translocation (for every two electrons transferred, four hydrogen ions are translocated across the cytoplasmic membrane), and thus conserves the redox energy in a proton gradient. This chain is NADH-quinone oxidoreductase subunit N, found in Magnetococcus marinus (strain ATCC BAA-1437 / JCM 17883 / MC-1).